A 148-amino-acid polypeptide reads, in one-letter code: Large ribosomal subunit protein bL9 (148 aa).

It belongs to the bacterial ribosomal protein bL9 family.

Its function is as follows. Binds to the 23S rRNA. This Listeria welshimeri serovar 6b (strain ATCC 35897 / DSM 20650 / CCUG 15529 / CIP 8149 / NCTC 11857 / SLCC 5334 / V8) protein is Large ribosomal subunit protein bL9.